Consider the following 190-residue polypeptide: Xanthine phosphoribosyltransferase (190 aa).

Leu-20 and Asn-27 together coordinate xanthine. 128–132 provides a ligand contact to 5-phospho-alpha-D-ribose 1-diphosphate; sequence ANGHA. Lys-156 is a binding site for xanthine.

This sequence belongs to the purine/pyrimidine phosphoribosyltransferase family. Xpt subfamily. As to quaternary structure, homodimer.

The protein resides in the cytoplasm. It carries out the reaction XMP + diphosphate = xanthine + 5-phospho-alpha-D-ribose 1-diphosphate. It participates in purine metabolism; XMP biosynthesis via salvage pathway; XMP from xanthine: step 1/1. Its function is as follows. Converts the preformed base xanthine, a product of nucleic acid breakdown, to xanthosine 5'-monophosphate (XMP), so it can be reused for RNA or DNA synthesis. The protein is Xanthine phosphoribosyltransferase of Pseudomonas aeruginosa (strain ATCC 15692 / DSM 22644 / CIP 104116 / JCM 14847 / LMG 12228 / 1C / PRS 101 / PAO1).